A 165-amino-acid polypeptide reads, in one-letter code: Interferon gamma (165 aa).

Residues 1–23 (MKYTSYILAFQLCIVLGSLGCYC) form the signal peptide. Gln-24 is subject to Pyrrolidone carboxylic acid. N-linked (GlcNAc...) asparagine glycans are attached at residues Asn-48 and Asn-120.

This sequence belongs to the type II (or gamma) interferon family. As to quaternary structure, homodimer. Interacts with IFNGR1 (via extracellular domain); this interaction promotes IFNGR1 dimerization. As to expression, released primarily from activated T lymphocytes.

It localises to the secreted. Type II interferon produced by immune cells such as T-cells and NK cells that plays crucial roles in antimicrobial, antiviral, and antitumor responses by activating effector immune cells and enhancing antigen presentation. Primarily signals through the JAK-STAT pathway after interaction with its receptor IFNGR1 to affect gene regulation. Upon IFNG binding, IFNGR1 intracellular domain opens out to allow association of downstream signaling components JAK2, JAK1 and STAT1, leading to STAT1 activation, nuclear translocation and transcription of IFNG-regulated genes. Many of the induced genes are transcription factors such as IRF1 that are able to further drive regulation of a next wave of transcription. Plays a role in class I antigen presentation pathway by inducing a replacement of catalytic proteasome subunits with immunoproteasome subunits. In turn, increases the quantity, quality, and repertoire of peptides for class I MHC loading. Increases the efficiency of peptide generation also by inducing the expression of activator PA28 that associates with the proteasome and alters its proteolytic cleavage preference. Up-regulates as well MHC II complexes on the cell surface by promoting expression of several key molecules such as cathepsins B/CTSB, H/CTSH, and L/CTSL. Participates in the regulation of hematopoietic stem cells during development and under homeostatic conditions by affecting their development, quiescence, and differentiation. The polypeptide is Interferon gamma (IFNG) (Cercocebus atys (Sooty mangabey)).